An 898-amino-acid chain; its full sequence is Coiled-coil domain-containing protein 186 (898 aa).

Disordered regions lie at residues 1–43 (MSET…NESK), 68–95 (NYIP…QIAN), and 702–749 (RRKL…SSVA). Residue S2 is modified to N-acetylserine. A compositionally biased stretch (polar residues) spans 82–95 (KTDTGSENSEQIAN). Positions 201–712 (KYLQQEHIIK…RKLDQVESGS (512 aa)) form a coiled coil. The span at 703–717 (RKLDQVESGSYDKEV) shows a compositional bias: basic and acidic residues. A compositionally biased stretch (low complexity) spans 718–734 (SSMGSRSSSSGSLNARS). S740 is subject to Phosphoserine. Coiled coils occupy residues 759 to 803 (AMLI…IQSY) and 855 to 894 (KLQA…LEQR).

The chain is Coiled-coil domain-containing protein 186 (CCDC186) from Homo sapiens (Human).